We begin with the raw amino-acid sequence, 78 residues long: MLIVILTCALLVIYHAAAAEELEAKDVIESKALATLDEERFECVLKCDIQYNGKNCKGKGENKCSGGWRCRFKLCLKI.

Residues 1–19 (MLIVILTCALLVIYHAAAA) form the signal peptide. A propeptide spanning residues 20–40 (EELEAKDVIESKALATLDEER) is cleaved from the precursor. Intrachain disulfides connect Cys-43–Cys-56, Cys-47–Cys-70, and Cys-64–Cys-75.

This sequence belongs to the neurotoxin 12 (Hwtx-2) family. 05 (OAIP-5) subfamily. Expressed by the venom gland.

It localises to the secreted. Functionally, probable ion channel inhibitor. Shows insecticidal activity when injected into mealworms. The polypeptide is Toxin OAIP 5 (Selenotypus plumipes (Australian featherleg tarantula)).